A 102-amino-acid chain; its full sequence is NADH-quinone oxidoreductase subunit K 1 (102 aa).

A run of 3 helical transmembrane segments spans residues 5 to 25 (FEHV…CVLV), 30 to 50 (LIML…AFVG), and 65 to 85 (LVIM…VVYL).

The protein belongs to the complex I subunit 4L family. As to quaternary structure, NDH-1 is composed of 14 different subunits. Subunits NuoA, H, J, K, L, M, N constitute the membrane sector of the complex.

The protein resides in the cell inner membrane. It catalyses the reaction a quinone + NADH + 5 H(+)(in) = a quinol + NAD(+) + 4 H(+)(out). In terms of biological role, NDH-1 shuttles electrons from NADH, via FMN and iron-sulfur (Fe-S) centers, to quinones in the respiratory chain. The immediate electron acceptor for the enzyme in this species is believed to be ubiquinone. Couples the redox reaction to proton translocation (for every two electrons transferred, four hydrogen ions are translocated across the cytoplasmic membrane), and thus conserves the redox energy in a proton gradient. This Geobacter metallireducens (strain ATCC 53774 / DSM 7210 / GS-15) protein is NADH-quinone oxidoreductase subunit K 1.